The chain runs to 403 residues: Imidazolonepropionase (403 aa).

Residues His-69 and His-71 each coordinate Fe(3+). 2 residues coordinate Zn(2+): His-69 and His-71. 4-imidazolone-5-propanoate-binding residues include Arg-78, Tyr-141, and His-174. An N-formimidoyl-L-glutamate-binding site is contributed by Tyr-141. His-239 serves as a coordination point for Fe(3+). His-239 lines the Zn(2+) pocket. Gln-242 provides a ligand contact to 4-imidazolone-5-propanoate. Asp-314 is a Fe(3+) binding site. Asp-314 contacts Zn(2+). Asn-316 and Gly-318 together coordinate N-formimidoyl-L-glutamate. Residue Ser-319 coordinates 4-imidazolone-5-propanoate.

It belongs to the metallo-dependent hydrolases superfamily. HutI family. Zn(2+) is required as a cofactor. Requires Fe(3+) as cofactor.

It localises to the cytoplasm. The catalysed reaction is 4-imidazolone-5-propanoate + H2O = N-formimidoyl-L-glutamate. It functions in the pathway amino-acid degradation; L-histidine degradation into L-glutamate; N-formimidoyl-L-glutamate from L-histidine: step 3/3. Catalyzes the hydrolytic cleavage of the carbon-nitrogen bond in imidazolone-5-propanoate to yield N-formimidoyl-L-glutamate. It is the third step in the universal histidine degradation pathway. In Legionella pneumophila (strain Paris), this protein is Imidazolonepropionase.